Here is a 379-residue protein sequence, read N- to C-terminus: MEKTFALITIFLAFAFSGKCSDVFSRCDFPEGFVFGSSTSAYQWEGAVAEDGRKPSVWDRFCHSHNNQGNGDITCDGYHKYKEDVKLMVDTNLDAFRFSISWSRLIPNRRGPVNQKGLQFYKNLIQELVNHGIEPYVTLHHFDHPQYLEDEYEGWLNHMIVEDFTAYADVCFREFGNHVKFWTTINEGNIFSIGGYNDGDSPPGRCSIPGQNCLLGNSSTEPYIVGHNLLLAHASVSRLYKQNYKDKQGGSIGFSILTIGFSPSTSSKDDAIATQRANDFFNGWMLGPLIYGDYPDTMKRIVGSRMPVFSEEESEQVKGSSDYIGINHYLAASITNSKLKPSISGNPDFYSDMNVILSFFANFSSSEYDVAPWAIEAVL.

A signal peptide spans 1-20 (MEKTFALITIFLAFAFSGKC). Residues Q43, H141, and 186-187 (NE) contribute to the a beta-D-glucoside site. The active-site Proton donor is the E187. C206 and C213 are oxidised to a cystine. An N-linked (GlcNAc...) asparagine glycan is attached at N217. Y329 is a binding site for a beta-D-glucoside. An N-linked (GlcNAc...) asparagine glycan is attached at N362.

This sequence belongs to the glycosyl hydrolase 1 family.

The enzyme catalyses Hydrolysis of terminal, non-reducing beta-D-glucosyl residues with release of beta-D-glucose.. The sequence is that of Putative beta-glucosidase 6 from Arabidopsis thaliana (Mouse-ear cress).